A 127-amino-acid polypeptide reads, in one-letter code: Large ribosomal subunit protein uL18 (127 aa).

It belongs to the universal ribosomal protein uL18 family. Part of the 50S ribosomal subunit; part of the 5S rRNA/L5/L18/L25 subcomplex. Contacts the 5S and 23S rRNAs.

In terms of biological role, this is one of the proteins that bind and probably mediate the attachment of the 5S RNA into the large ribosomal subunit, where it forms part of the central protuberance. This is Large ribosomal subunit protein uL18 from Streptomyces avermitilis (strain ATCC 31267 / DSM 46492 / JCM 5070 / NBRC 14893 / NCIMB 12804 / NRRL 8165 / MA-4680).